The primary structure comprises 103 residues: Ubiquitin-related modifier 1 (103 aa).

Gly-103 carries the post-translational modification 1-thioglycine. Gly-103 participates in a covalent cross-link: Glycyl lysine isopeptide (Gly-Lys) (interchain with K-? in acceptor proteins).

This sequence belongs to the URM1 family. C-terminal thiocarboxylation occurs in 2 steps, it is first acyl-adenylated (-COAMP) via the hesA/moeB/thiF part of UBA4, then thiocarboxylated (-COSH) via the rhodanese domain of UBA4.

The protein resides in the cytoplasm. The protein operates within tRNA modification; 5-methoxycarbonylmethyl-2-thiouridine-tRNA biosynthesis. In terms of biological role, acts as a sulfur carrier required for 2-thiolation of mcm(5)S(2)U at tRNA wobble positions of cytosolic tRNA(Lys), tRNA(Glu) and tRNA(Gln). Serves as sulfur donor in tRNA 2-thiolation reaction by being thiocarboxylated (-COSH) at its C-terminus by the MOCS3 homolog UBA4. The sulfur is then transferred to tRNA to form 2-thiolation of mcm(5)S(2)U. Prior mcm(5) tRNA modification by the elongator complex is required for 2-thiolation. Also acts as a ubiquitin-like protein (UBL) that is covalently conjugated via an isopeptide bond to lysine residues of target proteins such as AHP1. The thiocarboxylated form serves as substrate for conjugation and oxidative stress specifically induces the formation of UBL-protein conjugates. This Vanderwaltozyma polyspora (strain ATCC 22028 / DSM 70294 / BCRC 21397 / CBS 2163 / NBRC 10782 / NRRL Y-8283 / UCD 57-17) (Kluyveromyces polysporus) protein is Ubiquitin-related modifier 1.